The sequence spans 1457 residues: Eye-specific diacylglycerol kinase (1457 aa).

Disordered regions lie at residues 1–123 (MQQQ…SSEA), 136–177 (RSHS…PPCI), and 207–339 (YSNT…QPTT). Composition is skewed to low complexity over residues 22–62 (SATT…LRTT), 98–115 (SQRA…SSAS), and 141–154 (DSAT…DSGT). Residues 214 to 253 (ASEDEDEVEGHNAEEEEEGSAAIEDAEEETTEAATEEADE) show a composition bias toward acidic residues. Positions 254–266 (DPRTEVESEHDHD) are enriched in basic and acidic residues. Positions 294–303 (RLPRQMRRHT) are enriched in basic residues. 2 Phorbol-ester/DAG-type zinc fingers span residues 591-641 (HYWK…TLAC) and 661-724 (HHWV…GEEC). Residues 758–799 (NNAASGSGGGGAGGGAGGGGGKSKKQTQRRQKGKEEKKEPRA) form a disordered region. The span at 763-778 (GSGGGGAGGGAGGGGG) shows a compositional bias: gly residues. The segment covering 779-789 (KSKKQTQRRQK) has biased composition (basic residues). The region spanning 808–944 (PEVIPVIVFI…MDRWRVKVTP (137 aa)) is the DAGKc domain. The segment at 1264 to 1302 (TPDQERSFAAFSQRQAQNERRQMDQAQGRGPGSTDEDLQ) is disordered. ANK repeat units follow at residues 1320–1349 (QTSD…SLQS), 1353–1382 (NGQT…RRLI), 1389–1418 (LGQT…HLDT), and 1422–1451 (GGNT…TQPV).

It belongs to the eukaryotic diacylglycerol kinase family. In terms of tissue distribution, expressed specifically in adult eye.

The protein localises to the membrane. It catalyses the reaction a 1,2-diacyl-sn-glycerol + ATP = a 1,2-diacyl-sn-glycero-3-phosphate + ADP + H(+). In terms of biological role, required for the maintenance of phospholipid turnover within the photoreceptor. The protein is Eye-specific diacylglycerol kinase (rdgA) of Drosophila melanogaster (Fruit fly).